The primary structure comprises 488 residues: Ribulose bisphosphate carboxylase large chain (488 aa).

N127 and T177 together coordinate substrate. Catalysis depends on K179, which acts as the Proton acceptor. Residue K181 coordinates substrate. Residues K205, D207, and E208 each contribute to the Mg(2+) site. K205 is subject to N6-carboxylysine. H297 serves as the catalytic Proton acceptor. Substrate contacts are provided by R298, H330, and S382.

This sequence belongs to the RuBisCO large chain family. Type I subfamily. Heterohexadecamer of 8 large chains and 8 small chains. The cofactor is Mg(2+).

The protein localises to the plastid. It localises to the chloroplast. It carries out the reaction 2 (2R)-3-phosphoglycerate + 2 H(+) = D-ribulose 1,5-bisphosphate + CO2 + H2O. The enzyme catalyses D-ribulose 1,5-bisphosphate + O2 = 2-phosphoglycolate + (2R)-3-phosphoglycerate + 2 H(+). Functionally, ruBisCO catalyzes two reactions: the carboxylation of D-ribulose 1,5-bisphosphate, the primary event in carbon dioxide fixation, as well as the oxidative fragmentation of the pentose substrate in the photorespiration process. Both reactions occur simultaneously and in competition at the same active site. In Pyropia suborbiculata (Red alga), this protein is Ribulose bisphosphate carboxylase large chain.